The sequence spans 294 residues: Small ribosomal subunit protein uS2 (294 aa).

Positions 254-294 (ESSNTEAPVAETAAAEAPVADAAIEAPVAEEAKTTEADDTK) are disordered. Low complexity predominate over residues 259 to 282 (EAPVAETAAAEAPVADAAIEAPVA). Positions 283-294 (EEAKTTEADDTK) are enriched in basic and acidic residues.

Belongs to the universal ribosomal protein uS2 family.

The protein is Small ribosomal subunit protein uS2 of Renibacterium salmoninarum (strain ATCC 33209 / DSM 20767 / JCM 11484 / NBRC 15589 / NCIMB 2235).